The following is a 370-amino-acid chain: Histidinol-phosphate aminotransferase (370 aa).

Position 230 is an N6-(pyridoxal phosphate)lysine (Lys-230).

This sequence belongs to the class-II pyridoxal-phosphate-dependent aminotransferase family. Histidinol-phosphate aminotransferase subfamily. In terms of assembly, homodimer. It depends on pyridoxal 5'-phosphate as a cofactor.

The catalysed reaction is L-histidinol phosphate + 2-oxoglutarate = 3-(imidazol-4-yl)-2-oxopropyl phosphate + L-glutamate. The protein operates within amino-acid biosynthesis; L-histidine biosynthesis; L-histidine from 5-phospho-alpha-D-ribose 1-diphosphate: step 7/9. The sequence is that of Histidinol-phosphate aminotransferase from Leptospira interrogans serogroup Icterohaemorrhagiae serovar Lai (strain 56601).